A 109-amino-acid polypeptide reads, in one-letter code: MVWKRTISAKALEKAKSAAVKVDDKVIFIANVNGNLYAMDAVCSHARCILGKLDEEKLTVRCYCHLALFDLRTGQMLEPPYVAPDAPKEKLGLKTYQIRDNNGWIEVDV.

A Rieske domain is found at 3-107 (WKRTISAKAL…IRDNNGWIEV (105 aa)). Cys-43, His-45, Cys-62, and His-65 together coordinate [2Fe-2S] cluster.

Homooligomeric. The cofactor is [2Fe-2S] cluster.

The protein localises to the cytoplasm. Not yet known. This chain is Sulredoxin (sdx), found in Sulfurisphaera tokodaii (strain DSM 16993 / JCM 10545 / NBRC 100140 / 7) (Sulfolobus tokodaii).